The sequence spans 286 residues: 33 kDa chaperonin (286 aa).

Disulfide bonds link C225/C227 and C258/C261.

It belongs to the HSP33 family. In terms of processing, under oxidizing conditions two disulfide bonds are formed involving the reactive cysteines. Under reducing conditions zinc is bound to the reactive cysteines and the protein is inactive.

The protein resides in the cytoplasm. Functionally, redox regulated molecular chaperone. Protects both thermally unfolding and oxidatively damaged proteins from irreversible aggregation. Plays an important role in the bacterial defense system toward oxidative stress. This Shewanella sp. (strain MR-4) protein is 33 kDa chaperonin.